The sequence spans 278 residues: Large ribosomal subunit protein uL2 (278 aa).

The tract at residues 223-278 is disordered; sequence GSVMNPNDHPHGGGEGKAPIGHPSPMSPWGKKTLGKKTRDHKAKSEKFIVRHRRAK. Over residues 255–264 the composition is skewed to basic residues; that stretch reads TLGKKTRDHK.

Belongs to the universal ribosomal protein uL2 family. As to quaternary structure, part of the 50S ribosomal subunit. Forms a bridge to the 30S subunit in the 70S ribosome.

One of the primary rRNA binding proteins. Required for association of the 30S and 50S subunits to form the 70S ribosome, for tRNA binding and peptide bond formation. It has been suggested to have peptidyltransferase activity; this is somewhat controversial. Makes several contacts with the 16S rRNA in the 70S ribosome. In Lacticaseibacillus paracasei (strain ATCC 334 / BCRC 17002 / CCUG 31169 / CIP 107868 / KCTC 3260 / NRRL B-441) (Lactobacillus paracasei), this protein is Large ribosomal subunit protein uL2.